The primary structure comprises 252 residues: Streptothricin hydrolase (252 aa).

Cys-158 acts as the Nucleophile in catalysis. Positions Ala-230–Ser-242 are enriched in low complexity. A disordered region spans residues Ala-230–Arg-252. Positions Pro-243–Arg-252 are enriched in pro residues.

It belongs to the isochorismatase family.

The enzyme catalyses streptothricin F + H2O = streptothricin F acid. In terms of biological role, catalyzes the hydrolysis of the amide bond of streptolidine lactam, thereby conferring streptothricin (ST) resistance. Can hydrolyze streptothricin-F and streptothricin-D. However, this strain is believed to be a ST nonproducer, which raises the possibility that its true role may not be its involvement in self-resistance to STs. May catalyze the hydrolysis of naturally occurring cyclic amide compounds that are structurally related to STs. This Streptomyces noursei (Streptomyces albulus) protein is Streptothricin hydrolase (sttH).